The primary structure comprises 290 residues: 4-hydroxybenzoate octaprenyltransferase (290 aa).

Helical transmembrane passes span 23–43 (IGAL…TPGV), 46–66 (LWIL…GCVV), 99–119 (LFVV…TMTI), 141–161 (LPQV…FAAV), 163–183 (ESVP…AVAY), 213–233 (LIIG…GELN), 234–254 (GLGW…VYQQ), and 268–288 (AFMN…MSYW).

The protein belongs to the UbiA prenyltransferase family. Mg(2+) serves as cofactor.

The protein localises to the cell inner membrane. It catalyses the reaction all-trans-octaprenyl diphosphate + 4-hydroxybenzoate = 4-hydroxy-3-(all-trans-octaprenyl)benzoate + diphosphate. It functions in the pathway cofactor biosynthesis; ubiquinone biosynthesis. Functionally, catalyzes the prenylation of para-hydroxybenzoate (PHB) with an all-trans polyprenyl group. Mediates the second step in the final reaction sequence of ubiquinone-8 (UQ-8) biosynthesis, which is the condensation of the polyisoprenoid side chain with PHB, generating the first membrane-bound Q intermediate 3-octaprenyl-4-hydroxybenzoate. In Escherichia coli O6:K15:H31 (strain 536 / UPEC), this protein is 4-hydroxybenzoate octaprenyltransferase.